A 227-amino-acid polypeptide reads, in one-letter code: Lipoprotein-releasing system ATP-binding protein LolD (227 aa).

The ABC transporter domain occupies 7–227; it reads LRLERIGRAY…TLKDGRVVDL (221 aa). 43–50 lines the ATP pocket; sequence APSGAGKS.

The protein belongs to the ABC transporter superfamily. Lipoprotein translocase (TC 3.A.1.125) family. In terms of assembly, the complex is composed of two ATP-binding proteins (LolD) and two transmembrane proteins (LolC and LolE).

The protein localises to the cell inner membrane. Its function is as follows. Part of the ABC transporter complex LolCDE involved in the translocation of mature outer membrane-directed lipoproteins, from the inner membrane to the periplasmic chaperone, LolA. Responsible for the formation of the LolA-lipoprotein complex in an ATP-dependent manner. This Brucella abortus biovar 1 (strain 9-941) protein is Lipoprotein-releasing system ATP-binding protein LolD.